The sequence spans 122 residues: Structural protein p14.5 (122 aa).

Disordered regions lie at residues 1–27 (MADFNSPIQYLKEDSRDRTSIGSLEYD) and 85–122 (TSLVPEETDNKPEDDEESGAKPKKKKHLFPKLSSHKSK). Ala-2 is subject to N-acetylalanine; by host. Over residues 105 to 122 (KPKKKKHLFPKLSSHKSK) the composition is skewed to basic residues.

It belongs to the asfivirus structural protein p14.5 family. As to quaternary structure, interacts with the major capsid protein. Interacts with host IRF3; this interaction interferes with the recruitment of IRF3 to TBK1. In terms of processing, acetylated.

The protein resides in the virion. In terms of biological role, structural protein required for transport of intracellular particles from the assembly sites to the plasma membrane. Binds to both ssDNA and dsDNA. Suppressed the activation of the cGAS/STING pathway by interfering with the recruitment of IRF3 to TBK1, which in turn suppresses IRF3 phosphorylation, decreasing interferon production. This African swine fever virus (isolate Tick/Malawi/Lil 20-1/1983) (ASFV) protein is Structural protein p14.5.